The chain runs to 414 residues: uncharacterized protein (414 aa).

Positions 1–20 (MKKLLAIGILCIMVTAVMSG) are cleaved as a signal peptide. Cys21 carries the S-archaeol cysteine lipid modification. Residues 119 to 389 (RVIVMSSTEI…DLATILHPEA (271 aa)) form the Fe/B12 periplasmic-binding domain.

It is found in the cell membrane. This is an uncharacterized protein from Methanocaldococcus jannaschii (strain ATCC 43067 / DSM 2661 / JAL-1 / JCM 10045 / NBRC 100440) (Methanococcus jannaschii).